Consider the following 248-residue polypeptide: Deoxyribose-phosphate aldolase (248 aa).

The active-site Proton donor/acceptor is the Asp117. Lys179 functions as the Schiff-base intermediate with acetaldehyde in the catalytic mechanism. Lys208 serves as the catalytic Proton donor/acceptor.

The protein belongs to the DeoC/FbaB aldolase family. DeoC type 1 subfamily.

It localises to the cytoplasm. The enzyme catalyses 2-deoxy-D-ribose 5-phosphate = D-glyceraldehyde 3-phosphate + acetaldehyde. Its pathway is carbohydrate degradation; 2-deoxy-D-ribose 1-phosphate degradation; D-glyceraldehyde 3-phosphate and acetaldehyde from 2-deoxy-alpha-D-ribose 1-phosphate: step 2/2. Its function is as follows. Catalyzes a reversible aldol reaction between acetaldehyde and D-glyceraldehyde 3-phosphate to generate 2-deoxy-D-ribose 5-phosphate. This chain is Deoxyribose-phosphate aldolase, found in Thermotoga maritima (strain ATCC 43589 / DSM 3109 / JCM 10099 / NBRC 100826 / MSB8).